Consider the following 264-residue polypeptide: Segregation and condensation protein A (264 aa).

This sequence belongs to the ScpA family. Component of a cohesin-like complex composed of ScpA, ScpB and the Smc homodimer, in which ScpA and ScpB bind to the head domain of Smc. The presence of the three proteins is required for the association of the complex with DNA.

The protein resides in the cytoplasm. Its function is as follows. Participates in chromosomal partition during cell division. May act via the formation of a condensin-like complex containing Smc and ScpB that pull DNA away from mid-cell into both cell halves. This Enterococcus faecalis (strain ATCC 700802 / V583) protein is Segregation and condensation protein A.